The following is a 1397-amino-acid chain: Ankyrin repeat domain-containing protein 30A (1397 aa).

ANK repeat units lie at residues 72-101 (QKRT…QLDV), 105-134 (EHRT…DINL), 138-167 (YGNT…VIEV), 171-200 (ASLT…NANA), 204-233 (YKCT…DVFA), and 237-271 (CGVT…HQNT). The segment covering 267–279 (NHQNTNPEGTSAG) has biased composition (polar residues). Disordered stretches follow at residues 267–376 (NHQN…TWPA), 453–482 (PTKE…EYSC), 782–807 (QTLR…WDSE), and 902–931 (TLRA…LRET). Basic and acidic residues-rich tracts occupy residues 290–304 (RTPD…KTPD) and 312–326 (RTPD…KTPD). The segment covering 455 to 467 (KESSTKASANDQR) has biased composition (polar residues). Composition is skewed to basic and acidic residues over residues 782-800 (QTLR…KDYE) and 913-931 (SKQK…LRET). Coiled coils occupy residues 998-1188 (VLKK…KQDK) and 1282-1327 (EHAQ…FQLQ).

Mainly expressed in breast and testis. A very faint signal is detected in placenta. Also expressed in many breast cancer cells.

This is Ankyrin repeat domain-containing protein 30A (ANKRD30A) from Homo sapiens (Human).